A 28-amino-acid chain; its full sequence is Trypsin inhibitor A (28 aa).

3 cysteine pairs are disulfide-bonded: Cys3-Cys20, Cys10-Cys22, and Cys16-Cys27.

It belongs to the protease inhibitor I7 (squash-type serine protease inhibitor) family.

It localises to the secreted. Functionally, inhibits trypsin. The protein is Trypsin inhibitor A of Momordica charantia (Bitter gourd).